The chain runs to 115 residues: Large ribosomal subunit protein bL19 (115 aa).

Belongs to the bacterial ribosomal protein bL19 family.

This protein is located at the 30S-50S ribosomal subunit interface and may play a role in the structure and function of the aminoacyl-tRNA binding site. The protein is Large ribosomal subunit protein bL19 of Tolumonas auensis (strain DSM 9187 / NBRC 110442 / TA 4).